A 94-amino-acid chain; its full sequence is Putative pterin-4-alpha-carbinolamine dehydratase (94 aa).

It belongs to the pterin-4-alpha-carbinolamine dehydratase family.

It carries out the reaction (4aS,6R)-4a-hydroxy-L-erythro-5,6,7,8-tetrahydrobiopterin = (6R)-L-erythro-6,7-dihydrobiopterin + H2O. The protein is Putative pterin-4-alpha-carbinolamine dehydratase of Mycobacterium sp. (strain JLS).